Consider the following 658-residue polypeptide: ATP-dependent RNA helicase DDX3Y (658 aa).

The tract at residues 1-143 (MSQVAAESTA…DWSKPLPPSE (143 aa)) is disordered. S2 is modified (N-acetylserine). Residues 45 to 69 (RNRETSKGVCDKDSSGWSCSKDKDA) show a composition bias toward basic and acidic residues. Residue K56 is modified to N6-acetyllysine. 2 positions are modified to phosphoserine: S86 and S90. Over residues 94-129 (GRFDDHGRNDYDGIGGRDRTGFGKFERSGHSRWSDR) the composition is skewed to basic and acidic residues. R101 carries the omega-N-methylarginine modification. Y104 bears the Phosphotyrosine mark. Position 110 is an omega-N-methylarginine (R110). K117 is modified (N6-acetyllysine). Phosphoserine is present on residues S130 and S182. A Q motif motif is present at residues 179-207 (ENFSDIEMGEIIMGNIELTRYTRPTPVQK). Residue 199–206 (YTRPTPVQ) participates in ATP binding. A Helicase ATP-binding domain is found at 210 to 402 (IPIIKEKRDL…RDFLDEYIFL (193 aa)). A Glycyl lysine isopeptide (Lys-Gly) (interchain with G-Cter in SUMO2) cross-link involves residue K214. Residue 223–230 (AQTGSGKT) participates in ATP binding. The DEAD box motif lies at 346–349 (DEAD). The Helicase C-terminal domain maps to 413–574 (NITQKVVWVE…EVPSWLESMA (162 aa)). Position 455 is a phosphoserine (S455). R590 carries the post-translational modification Omega-N-methylarginine. S592 and S603 each carry phosphoserine. Positions 597-627 (ARDYRQSSGSANAGFNSNRANSSRSSGSSHN) are disordered. A compositionally biased stretch (low complexity) spans 603–627 (SSGSANAGFNSNRANSSRSSGSSHN). Omega-N-methylarginine occurs at positions 615 and 628.

It belongs to the DEAD box helicase family. DDX3/DED1 subfamily. Found in heart, brain, liver, skeletal muscle, kidney and testis. Low expression detected in lung. In testis, expressed in all types of spermatogenic cells including spermatogonia, spermatocytes, spermatids and somatic Sertoli cells within the seminiferous tubules. Also expressed in Leydig cells and other interstitial cells.

Its subcellular location is the cytoplasm. It is found in the nucleus. The catalysed reaction is ATP + H2O = ADP + phosphate + H(+). In terms of biological role, probable ATP-dependent RNA helicase. During immune response, may enhance IFNB1 expression via IRF3/IRF7 pathway. In Mus musculus (Mouse), this protein is ATP-dependent RNA helicase DDX3Y (Ddx3y).